The primary structure comprises 198 residues: Ribonuclease HII (198 aa).

An RNase H type-2 domain is found at 10 to 198 (HLVAGVDEVG…PVRRALGIAS (189 aa)). Residues D16, E17, and D108 each contribute to the a divalent metal cation site.

This sequence belongs to the RNase HII family. Mn(2+) is required as a cofactor. The cofactor is Mg(2+).

The protein localises to the cytoplasm. It carries out the reaction Endonucleolytic cleavage to 5'-phosphomonoester.. Endonuclease that specifically degrades the RNA of RNA-DNA hybrids. This chain is Ribonuclease HII, found in Cronobacter sakazakii (strain ATCC BAA-894) (Enterobacter sakazakii).